Reading from the N-terminus, the 219-residue chain is Large ribosomal subunit protein bL25 (219 aa).

The interval 193 to 219 is disordered; that stretch reads VSSTELEETPEVPASAVPTTDQGESAE. Residues 209–219 are compositionally biased toward polar residues; sequence VPTTDQGESAE.

This sequence belongs to the bacterial ribosomal protein bL25 family. CTC subfamily. In terms of assembly, part of the 50S ribosomal subunit; part of the 5S rRNA/L5/L18/L25 subcomplex. Contacts the 5S rRNA. Binds to the 5S rRNA independently of L5 and L18.

This is one of the proteins that binds to the 5S RNA in the ribosome where it forms part of the central protuberance. The polypeptide is Large ribosomal subunit protein bL25 (Legionella pneumophila (strain Corby)).